A 711-amino-acid chain; its full sequence is Ubiquitin carboxyl-terminal hydrolase BAP1 (711 aa).

The region spanning 4–234 (GWLELESDPG…ARLHVLKVNR (231 aa)) is the UCH catalytic domain. The Arg-finger motif motif lies at 56 to 60 (RRSRR). The Nucleophile role is filled by C91. The active-site Proton donor is the H169. A disordered region spans residues 255-337 (THKSQESQLP…VPPNPTPIVQ (83 aa)). The span at 269-278 (PASSKSPLAL) shows a compositional bias: low complexity. S274 carries the phosphoserine modification. The HBM-like motif signature appears at 345–348 (NHNY). 2 positions are modified to phosphoserine: S351 and S377. 2 disordered regions span residues 354–420 (QEEE…GQLS) and 446–506 (SIKT…SPVT). Residues 377–391 (SDDEDDYEDEEEDDA) are compositionally biased toward acidic residues. Positions 462 to 506 (THSQPSPTPSNESTDTASEIGSAFNSPLRSPIRSANPTRPSSPVT) are enriched in polar residues. A Phosphothreonine modification is found at T475. Residues S503, S519, S567, and S579 each carry the phosphoserine modification. The disordered stretch occupies residues 557–605 (LTESGKGSSPSIRPSQGSQGSGSPEEKEVVEAVDSREKPGLVRPSESLN). A compositionally biased stretch (low complexity) spans 563-579 (GSSPSIRPSQGSQGSGS). An interaction with BRCA1 region spans residues 578 to 703 (GSPEEKEVVE…QRKPDRRKRS (126 aa)). A compositionally biased stretch (basic and acidic residues) spans 580–596 (PEEKEVVEAVDSREKPG). Residues 612–643 (KELLALLKCVEAEIANYEACLKEEVEKRKKFK) are a coiled coil. The interval 624–668 (EIANYEACLKEEVEKRKKFKIDDQRRTHNYDEFICTFISMLAQEG) is interaction with YY1. The region spanning 652 to 680 (NYDEFICTFISMLAQEGMLANLVEQNISV) is the ULD domain. The tract at residues 681–683 (RRR) is interaction with nucleosomal DNA forming a DNA clamp with ASXL1. A Classical bipartite Nuclear localization signal (NLS) motif is present at residues 681-704 (RRRQGVSIGRLHKQRKPDRRKRSR). The tract at residues 685-711 (GVSIGRLHKQRKPDRRKRSRPYKAKRQ) is disordered. Residues 695 to 711 (RKPDRRKRSRPYKAKRQ) form a positively charged C-terminal extension (CTE) region. The short motif at 699-704 (RRKRSR) is the Nuclear localization signal element. The short motif at 699 to 706 (RRKRSRPY) is the Non-classical PY-nuclear localization signal (PY-NLS) element.

Belongs to the peptidase C12 family. BAP1 subfamily. In terms of assembly, core component of the polycomb repressive deubiquitinase (PR-DUB) complex, at least composed of BAP1, one of ASXL1, ASXL2 or (probably) ASXL3, and one of MBD5 or MBD6. The PR-DUB core associates with a number of accessory proteins, including FOXK1, FOXK2, KDM1B, HCFC1, YY1 and OGT; KDM1B specifically associates with ASXL2 PR-DUB complexes. The BAP1 deubiquitinase activity is not required for PR-DUB assembly. Homodimerizes (via coiled-coil hinge-region between the UCH and ULD domains) to mediate assembly of 2 copies of the BAP1-ASXL heterodimer into a bisymmetric tetramer; dimerization enhances association with nucleosomes. The PR-DUB complex associates with nucleosomes to mediate deubiquitination of 'lys-120' of histone H2AK118ub1 substrates; the association requires the positively charged C-terminal tail of BAP1. Interacts (via ULD domain) with ASXL1 (via DEUBAD domain); the interaction is direct and forms a ubiquitin binding cleft. The interaction with ASXL1 stabilizes BAP1 but is not required for nucleosome binding. Associates (via C-terminus) with nucleosome and chromatosome complexes through direct interaction with DNA and the histone3/4 dimer; this association displaces the histone-2A C-terminal tail, extending and orienting the H2AK118ub1 substrate towards the BAP1 deubiquitinase active site. Also interacts (via arginine finger) directly with the histone H2A-H2B acidic patch; this interaction is not critical for nucleosome-chromatosome association but may play a role in orienting the H2AK118ub1 substrate towards the PR-DUB complex active site. Interacts with BRCA1 (via the RING finger). Interacts (via HBM-like motif) with HCFC1. Interacts (via a C-terminal region overlapping the ULD domain) with YY1; the interaction is direct and requires the interaction with HCFC1. Interacts (when phosphorylated at Thr-475) with FOXK1. Interacts (when phosphorylated at Thr-475) with FOXK2; leading to recruitment of the PR-DUB complex and repression of FOXK2 target genes. Interacts (via non-classical PY-NLS) with TNPO1/transportin-1 (via HEAT repeats 8-12); the interaction is direct, mediates BAP1 nuclear localization and disrupts BAP1 homodimerization. Interacts (via C-terminus) with KPNA1/importin alpha5 and KPNA2/importin alpha1; these interactions can contribute to BAP1 nuclear localization but are less important than the interaction with TNPO1/transportin-1. The interaction with TNPO1/transportin-1 disrupts homodimerization and blocks ubiquitination by UBE2O. Post-translationally, ubiquitinated: monoubiquitinated at multiple sites within its nuclear localization signal (NLS) BY UBE2O, leading to cytoplasmic retention. Able to mediate autodeubiquitination via intramolecular interactions to counteract cytoplasmic retention. Monoubiquitinated on at least 4 sites near or within its PY-NLS.

It is found in the cytoplasm. It localises to the nucleus. The protein localises to the chromosome. It catalyses the reaction Thiol-dependent hydrolysis of ester, thioester, amide, peptide and isopeptide bonds formed by the C-terminal Gly of ubiquitin (a 76-residue protein attached to proteins as an intracellular targeting signal).. Functionally, deubiquitinating enzyme that plays a key role in chromatin by mediating deubiquitination of histone H2A and HCFC1. Catalytic component of the polycomb repressive deubiquitinase (PR-DUB) complex, a complex that specifically mediates deubiquitination of histone H2A monoubiquitinated at 'Lys-120' (H2AK119ub1). Does not deubiquitinate monoubiquitinated histone H2B. The PR-DUB complex is an epigenetic regulator of gene expression and acts as a transcriptional coactivator, affecting genes involved in development, cell communication, signaling, cell proliferation and cell viability. Antagonizes PRC1 mediated H2AK119ub1 monoubiquitination. As part of the PR-DUB complex, associates with chromatin enriched in histone marks H3K4me1, H3K4me3, and H3K27Ac, but not in H3K27me3. Acts as a regulator of cell growth by mediating deubiquitination of HCFC1 N-terminal and C-terminal chains, with some specificity toward 'Lys-48'-linked polyubiquitin chains compared to 'Lys-63'-linked polyubiquitin chains. Deubiquitination of HCFC1 does not lead to increase stability of HCFC1. Interferes with the BRCA1 and BARD1 heterodimer activity by inhibiting their ability to mediate ubiquitination and autoubiquitination. It however does not mediate deubiquitination of BRCA1 and BARD1. Able to mediate autodeubiquitination via intramolecular interactions to counteract monoubiquitination at the nuclear localization signal (NLS), thereby protecting it from cytoplasmic sequestration. Negatively regulates epithelial-mesenchymal transition (EMT) of trophoblast stem cells during placental development by regulating genes involved in epithelial cell integrity, cell adhesion and cytoskeletal organization. The protein is Ubiquitin carboxyl-terminal hydrolase BAP1 (BAP1) of Bos taurus (Bovine).